We begin with the raw amino-acid sequence, 297 residues long: D-alanine--D-alanine ligase (297 aa).

One can recognise an ATP-grasp domain in the interval 103-293 (KEILMHHRMP…FDSFVKSILE (191 aa)). 129 to 180 (ISFPVAVKPSSGGSSIATFKVKSLEELENAYQQASKHGEVMIEQWVTGKEIT) provides a ligand contact to ATP. Residues D247, E260, and N262 each contribute to the Mg(2+) site.

Belongs to the D-alanine--D-alanine ligase family. Requires Mg(2+) as cofactor. Mn(2+) serves as cofactor.

The protein resides in the cytoplasm. The enzyme catalyses 2 D-alanine + ATP = D-alanyl-D-alanine + ADP + phosphate + H(+). Its pathway is cell wall biogenesis; peptidoglycan biosynthesis. Cell wall formation. This chain is D-alanine--D-alanine ligase, found in Francisella philomiragia subsp. philomiragia (strain ATCC 25017 / CCUG 19701 / FSC 153 / O#319-036).